A 137-amino-acid chain; its full sequence is Hydrogenase maturation factor HypA (137 aa).

Position 2 (His2) interacts with Ni(2+). Zn(2+) is bound by residues Cys73, Cys75, Cys105, and Cys108.

The protein belongs to the HypA/HybF family.

Functionally, involved in the maturation of [NiFe] hydrogenases. Required for nickel insertion into the metal center of the hydrogenase. This Methanosarcina mazei (strain ATCC BAA-159 / DSM 3647 / Goe1 / Go1 / JCM 11833 / OCM 88) (Methanosarcina frisia) protein is Hydrogenase maturation factor HypA.